Consider the following 686-residue polypeptide: DNA ligase 1 (686 aa).

Residues 35 to 39 (DFEYD), 84 to 85 (SL), and glutamate 119 contribute to the NAD(+) site. Lysine 121 acts as the N6-AMP-lysine intermediate in catalysis. NAD(+) is bound by residues arginine 142, glutamate 177, lysine 293, and lysine 317. 4 residues coordinate Zn(2+): cysteine 411, cysteine 414, cysteine 429, and cysteine 434. The BRCT domain maps to 602-686 (RVGEQLAGLT…LAEKGAPPLP (85 aa)).

The protein belongs to the NAD-dependent DNA ligase family. LigA subfamily. The cofactor is Mg(2+). Requires Mn(2+) as cofactor.

The enzyme catalyses NAD(+) + (deoxyribonucleotide)n-3'-hydroxyl + 5'-phospho-(deoxyribonucleotide)m = (deoxyribonucleotide)n+m + AMP + beta-nicotinamide D-nucleotide.. Functionally, DNA ligase that catalyzes the formation of phosphodiester linkages between 5'-phosphoryl and 3'-hydroxyl groups in double-stranded DNA using NAD as a coenzyme and as the energy source for the reaction. It is essential for DNA replication and repair of damaged DNA. The sequence is that of DNA ligase 1 from Deinococcus deserti (strain DSM 17065 / CIP 109153 / LMG 22923 / VCD115).